The primary structure comprises 191 residues: GDP-mannose pyrophosphatase (191 aa).

GDP-alpha-D-mannose-binding positions include Y17, 38–40 (KRE), R67, and 85–87 (AGL). A Nudix hydrolase domain is found at 43-180 (DRGNGATILL…EIRDGKTVLL (138 aa)). A85, E100, and E104 together coordinate Mg(2+). A Nudix box motif is present at residues 86–106 (GLLDNDEPEVCIRKEAIEETG). Residues E104, E127, 150–151 (DE), and K176 each bind GDP-alpha-D-mannose. E151 lines the Mg(2+) pocket.

Belongs to the Nudix hydrolase family. NudK subfamily. As to quaternary structure, homodimer. Mg(2+) is required as a cofactor.

The catalysed reaction is GDP-alpha-D-mannose + H2O = alpha-D-mannose 1-phosphate + GMP + 2 H(+). In terms of biological role, nucleoside diphosphate sugar hydrolase that hydrolyzes GDP-mannose as its preferred substrate, yielding GMP and mannose-1-phosphate. This chain is GDP-mannose pyrophosphatase (nudK), found in Escherichia coli (strain K12 / DH10B).